The following is a 441-amino-acid chain: Putative F-box protein At1g33530 (441 aa).

In terms of domain architecture, F-box spans 91-137 (TTLAVELPDVLVEEILQRLPVKYLVRLKSISKGWKSLIESDHLAEKH).

The polypeptide is Putative F-box protein At1g33530 (Arabidopsis thaliana (Mouse-ear cress)).